Reading from the N-terminus, the 272-residue chain is NAD kinase (272 aa).

D62 serves as the catalytic Proton acceptor. Residues 62-63, R67, 129-130, R140, K157, D159, 170-175, A194, and Q229 each bind NAD(+); these read DG, NE, and SSYSSS.

It belongs to the NAD kinase family. Requires a divalent metal cation as cofactor.

Its subcellular location is the cytoplasm. It catalyses the reaction NAD(+) + ATP = ADP + NADP(+) + H(+). Functionally, involved in the regulation of the intracellular balance of NAD and NADP, and is a key enzyme in the biosynthesis of NADP. Catalyzes specifically the phosphorylation on 2'-hydroxyl of the adenosine moiety of NAD to yield NADP. In Thermoplasma volcanium (strain ATCC 51530 / DSM 4299 / JCM 9571 / NBRC 15438 / GSS1), this protein is NAD kinase.